The sequence spans 312 residues: Ribonuclease Z (312 aa).

Zn(2+) is bound by residues His63, His65, Asp67, His68, His141, Asp212, and His270. Residue Asp67 is the Proton acceptor of the active site.

The protein belongs to the RNase Z family. As to quaternary structure, homodimer. Zn(2+) is required as a cofactor.

It carries out the reaction Endonucleolytic cleavage of RNA, removing extra 3' nucleotides from tRNA precursor, generating 3' termini of tRNAs. A 3'-hydroxy group is left at the tRNA terminus and a 5'-phosphoryl group is left at the trailer molecule.. Functionally, zinc phosphodiesterase, which displays some tRNA 3'-processing endonuclease activity. Probably involved in tRNA maturation, by removing a 3'-trailer from precursor tRNA. The protein is Ribonuclease Z of Lactobacillus helveticus (strain DPC 4571).